The chain runs to 625 residues: Protein arginine N-methyltransferase skb1 (625 aa).

Residues 280-588 form the SAM-dependent MTase PRMT-type domain; the sequence is LQVPLQPLSY…WRLTDGMRVW (309 aa). S-adenosyl-L-methionine contacts are provided by residues tyrosine 296, 305–306, glutamate 359, and 386–387; these read KY and DM. Catalysis depends on proton donor/acceptor residues glutamate 402 and glutamate 411.

The protein belongs to the class I-like SAM-binding methyltransferase superfamily. Protein arginine N-methyltransferase family. In terms of assembly, interacts with the N-terminal regulatory domain of shk1. Shk1, cdc42 and skb1 are able to form a ternary complex in vivo. Interacts with orb6. Interacts with Cdr1 and the Cdr1 inhibitory target Wee1.

The protein localises to the nucleus. Its subcellular location is the cell tip. It is found in the cell septum. The protein resides in the cytoplasm. It localises to the cell cortex. S-adenosyl-L-methionine-dependent protein-arginine N-methyltransferase that can catalyze both the mono- and symmetric (type II) dimethylation of the guanidino nitrogens of arginine residues in target proteins. Delays mitotic entry by inhibiting the Cdr1-Wee1 signaling pathway. Cortical nodes sequester Skb1 from its regulatory targets Cdr1 and Wee1. Positively modulates the shk1 kinase function. May be a mediator of hyperosmotic stress response. Involved in the control of cell polarity by regulating the subcellular localization of Orb6 kinase. This is Protein arginine N-methyltransferase skb1 from Schizosaccharomyces pombe (strain 972 / ATCC 24843) (Fission yeast).